A 123-amino-acid polypeptide reads, in one-letter code: Large ribosomal subunit protein uL29 (123 aa).

It belongs to the universal ribosomal protein uL29 family. Component of the large ribosomal subunit.

The protein localises to the cytoplasm. Functionally, component of the large ribosomal subunit. The ribosome is a large ribonucleoprotein complex responsible for the synthesis of proteins in the cell. This Xenopus tropicalis (Western clawed frog) protein is Large ribosomal subunit protein uL29 (rpl35).